Here is a 221-residue protein sequence, read N- to C-terminus: Endonuclease V (221 aa).

Mg(2+) contacts are provided by Asp-43 and Asp-111.

It belongs to the endonuclease V family. Requires Mg(2+) as cofactor.

Its subcellular location is the cytoplasm. It carries out the reaction Endonucleolytic cleavage at apurinic or apyrimidinic sites to products with a 5'-phosphate.. DNA repair enzyme involved in the repair of deaminated bases. Selectively cleaves double-stranded DNA at the second phosphodiester bond 3' to a deoxyinosine leaving behind the intact lesion on the nicked DNA. This is Endonuclease V from Azotobacter vinelandii (strain DJ / ATCC BAA-1303).